The primary structure comprises 584 residues: Pescadillo homolog (584 aa).

The tract at residues 1–54 is required for 28S ribosomal RNA processing; it reads MGGLEKKKYERGSATNYITRNKARKKLQLSLPDFRRLCILKGIYPHEPKHKKKV. The tract at residues 1–257 is sufficient for nucleolar localization; that stretch reads MGGLEKKKYE…PKLEGQAQAE (257 aa). Position 98 is an N6-acetyllysine (K98). Positions 312–414 are sufficient for interaction with MAP1B; it reads RKKELEAQEK…LLLPVAEYFP (103 aa). The region spanning 321-414 is the BRCT domain; the sequence is KHKKLFEGLK…LLLPVAEYFP (94 aa). The interval 449–510 is disordered; that stretch reads DPGHLEEEEE…EEKKPQVMAG (62 aa). Positions 454–489 are enriched in acidic residues; it reads EEEEEEDEDDDNEGDVAAENEEEDVEVESEEEEEEE. Residues 496 to 505 are compositionally biased toward basic and acidic residues; it reads EQHRLEEKKP. K513 is covalently cross-linked (Glycyl lysine isopeptide (Lys-Gly) (interchain with G-Cter in SUMO1); alternate). Residue K513 forms a Glycyl lysine isopeptide (Lys-Gly) (interchain with G-Cter in SUMO2); alternate linkage. A required for 28S ribosomal RNA processing region spans residues 535-584; sequence MMKKREKYLYQKIMFGKRRKIREANKLAEKRKAHDDAVRSEKKAKRTRPV. Over residues 560–575 the composition is skewed to basic and acidic residues; sequence KLAEKRKAHDDAVRSE. Residues 560-584 are disordered; the sequence is KLAEKRKAHDDAVRSEKKAKRTRPV.

Belongs to the pescadillo family. Component of the PeBoW complex, composed of BOP1, PES1 and WDR12. The complex is held together by BOP1, which interacts with PES1 via its N-terminal domain and with WDR12 via a high-affinity interaction between the seven-bladed beta-propeller domains of the 2 proteins. The PeBoW complex associates with the 66S pre-ribosome. The PeBoW complex also associates with DDX27, PES1 interacts directly with DDX27. Interacts with IRS1 and UBTF. May interact with MAP1B. Sumoylated. As to expression, ubiquitous. Highest levels appear to be found in tissues that contain a population of proliferating cells, such as ovary and testis. Also appears to be highly expressed in kidney and liver. In the brain expression is restricted to neural progenitor cells and postmitotic neurons. Highly expressed in malignant astrocytes.

The protein localises to the nucleus. It is found in the nucleolus. The protein resides in the nucleoplasm. Its subcellular location is the chromosome. Component of the PeBoW complex, which is required for maturation of 28S and 5.8S ribosomal RNAs and formation of the 60S ribosome. This Mus musculus (Mouse) protein is Pescadillo homolog (Pes1).